Consider the following 143-residue polypeptide: MKVEAVVEVRYTEDKAKVLKALENVFTPKRVEERESDSGMLLVASCEGAGCLEKLRSAIWRQGIQDAARSVLSKGVVGEDTVVFSVNKQAAYVGVVSFVTEPGESPLGPITFTVKTNNVRQFLDWLAPRTYRGRVYYEAPPPD.

This sequence belongs to the UPF0201 family.

The sequence is that of UPF0201 protein Tneu_0685 from Pyrobaculum neutrophilum (strain DSM 2338 / JCM 9278 / NBRC 100436 / V24Sta) (Thermoproteus neutrophilus).